Reading from the N-terminus, the 188-residue chain is Ribosome-recycling factor (188 aa).

It belongs to the RRF family.

It localises to the cytoplasm. Responsible for the release of ribosomes from messenger RNA at the termination of protein biosynthesis. May increase the efficiency of translation by recycling ribosomes from one round of translation to another. The sequence is that of Ribosome-recycling factor from Cereibacter sphaeroides (strain ATCC 17029 / ATH 2.4.9) (Rhodobacter sphaeroides).